The primary structure comprises 356 residues: Phosphate acyltransferase (356 aa).

It belongs to the PlsX family. As to quaternary structure, homodimer. Probably interacts with PlsY.

It localises to the cytoplasm. It carries out the reaction a fatty acyl-[ACP] + phosphate = an acyl phosphate + holo-[ACP]. It participates in lipid metabolism; phospholipid metabolism. Its function is as follows. Catalyzes the reversible formation of acyl-phosphate (acyl-PO(4)) from acyl-[acyl-carrier-protein] (acyl-ACP). This enzyme utilizes acyl-ACP as fatty acyl donor, but not acyl-CoA. The chain is Phosphate acyltransferase from Shigella boydii serotype 4 (strain Sb227).